Consider the following 1828-residue polypeptide: Protein TIC 214 (1828 aa).

The next 6 membrane-spanning stretches (helical) occupy residues 18–38 (IINSVVVVGLYYGFLTTFSIG), 64–84 (FITGQLMIFISIYYAPLHLAM), 87–107 (PYTITVLGLPYLLFHFFWKNH), 124–144 (FSIQSIFLNNFIFQLLNHFVL), 172–192 (VGWLIGHILFMKWVGLILFWI), and 222–242 (VNIFLFITCVYYLGRIPSPIL). Residues 270–279 (SEAKETKQEQ) are compositionally biased toward basic and acidic residues. 4 disordered regions span residues 270 to 301 (SEAKETKQEQKGSFAEEDSSLGSEEREDPNKL), 618 to 637 (DLQQQERENEEESTEDHAIR), 741 to 763 (EFKTSNSDEKETKEKEKKREDKK), and 1533 to 1571 (KEEFGQGNLGSDTQNQQKDVEKDYAKSDIKKRGKKRQSK). Residues 1550-1562 (KDVEKDYAKSDIK) show a composition bias toward basic and acidic residues.

It belongs to the TIC214 family. In terms of assembly, part of the Tic complex.

The protein localises to the plastid. Its subcellular location is the chloroplast inner membrane. In terms of biological role, involved in protein precursor import into chloroplasts. May be part of an intermediate translocation complex acting as a protein-conducting channel at the inner envelope. The polypeptide is Protein TIC 214 (Calycanthus floridus var. glaucus (Eastern sweetshrub)).